Reading from the N-terminus, the 216-residue chain is Methylthioribulose-1-phosphate dehydratase (216 aa).

Residues histidine 101 and histidine 103 each contribute to the Zn(2+) site.

The protein belongs to the aldolase class II family. MtnB subfamily. The cofactor is Zn(2+).

It catalyses the reaction 5-(methylsulfanyl)-D-ribulose 1-phosphate = 5-methylsulfanyl-2,3-dioxopentyl phosphate + H2O. It functions in the pathway amino-acid biosynthesis; L-methionine biosynthesis via salvage pathway; L-methionine from S-methyl-5-thio-alpha-D-ribose 1-phosphate: step 2/6. Functionally, catalyzes the dehydration of methylthioribulose-1-phosphate (MTRu-1-P) into 2,3-diketo-5-methylthiopentyl-1-phosphate (DK-MTP-1-P). This Bradyrhizobium sp. (strain BTAi1 / ATCC BAA-1182) protein is Methylthioribulose-1-phosphate dehydratase.